The chain runs to 440 residues: Beta-1,3-galactosyl-O-glycosyl-glycoprotein beta-1,6-N-acetylglucosaminyltransferase 3 (440 aa).

Residues 1-12 (MKMTGWKKKLCR) lie on the Cytoplasmic side of the membrane. Residues 13-30 (GHHLWALGCYMLLAVVAL) form a helical; Signal-anchor for type II membrane protein membrane-spanning segment. At 31–440 (RLSLRLKCDV…RHKAIYGTEL (410 aa)) the chain is on the lumenal side. N-linked (GlcNAc...) asparagine glycosylation is found at asparagine 72 and asparagine 108. Cystine bridges form between cysteine 73–cysteine 230, cysteine 164–cysteine 384, cysteine 185–cysteine 212, and cysteine 393–cysteine 425.

It belongs to the glycosyltransferase 14 family. Post-translationally, N-glycosylated. As to expression, primarily expressed in mucus-secreting tissues.

It localises to the golgi apparatus membrane. It catalyses the reaction a 3-O-[beta-D-galactosyl-(1-&gt;3)-N-acetyl-alpha-D-galactosaminyl]-L-seryl-[protein] + UDP-N-acetyl-alpha-D-glucosamine = 3-O-{beta-D-galactosyl-(1-&gt;3)-[N-acetyl-beta-D-glucosaminyl-(1-&gt;6)]-N-acetyl-alpha-D-galactosaminyl}-L-seryl-[protein] + UDP + H(+). The catalysed reaction is a 3-O-[beta-D-galactosyl-(1-&gt;3)-N-acetyl-alpha-D-galactosaminyl]-L-threonyl-[protein] + UDP-N-acetyl-alpha-D-glucosamine = a 3-O-{beta-D-galactosyl-(1-&gt;3)-[N-acetyl-beta-D-glucosaminyl-(1-&gt;6)]-N-acetyl-alpha-D-galactosaminyl}-L-threonyl-[protein] + UDP + H(+). The enzyme catalyses a beta-D-Gal-(1-&gt;4)-beta-D-GlcNAc-(1-&gt;3)-beta-D-Gal-(1-&gt;4)-beta-D-GlcNAc derivative + UDP-N-acetyl-alpha-D-glucosamine = a beta-D-Gal-(1-&gt;4)-beta-D-GlcNAc-(1-&gt;3)-[beta-D-GlcNAc-(1-&gt;6)]-beta-D-Gal-(1-&gt;4)-N-acetyl-beta-D-glucosaminyl derivative + UDP + H(+). It carries out the reaction 3-O-[N-acetyl-beta-D-glucosaminyl-(1-&gt;3)-N-acetyl-alpha-D-galactosaminyl]-L-seryl-[protein] + UDP-N-acetyl-alpha-D-glucosamine = 3-O-[N-acetyl-beta-D-glucosaminyl-(1-&gt;3)-[N-acetyl-beta-D-glucosaminyl-(1-&gt;6)]-N-acetyl-alpha-D-galactosaminyl]-L-seryl-[protein] + UDP + H(+). It catalyses the reaction a 3-O-[N-acetyl-beta-D-glucosaminyl-(1-&gt;3)-N-acetyl-alpha-D-galactosaminyl]-L-threonyl-[protein] + UDP-N-acetyl-alpha-D-glucosamine = 3-O-[N-acetyl-beta-D-glucosaminyl-(1-&gt;3)-[N-acetyl-beta-D-glucosaminyl-(1-&gt;6)]-N-acetyl-alpha-D-galactosaminyl]-L-threonyl-[protein] + UDP + H(+). It participates in protein modification; protein glycosylation. In terms of biological role, glycosyltransferase that can synthesize all known mucin beta 6 N-acetylglucosaminides. Mediates core 2 and core 4 O-glycan branching, 2 important steps in mucin-type biosynthesis. Also has I-branching enzyme activity by converting linear into branched poly-N-acetyllactosaminoglycans, leading to introduce the blood group I antigen during embryonic development. The sequence is that of Beta-1,3-galactosyl-O-glycosyl-glycoprotein beta-1,6-N-acetylglucosaminyltransferase 3 (GCNT3) from Bos taurus (Bovine).